We begin with the raw amino-acid sequence, 126 residues long: uncharacterized protein (126 aa).

This is an uncharacterized protein from Escherichia coli (strain K12).